The following is a 333-amino-acid chain: Tryptophan--tRNA ligase (333 aa).

ATP is bound by residues 11 to 13 and 19 to 20; these read QPS and GN. The 'HIGH' region signature appears at 12-20; sequence PSGELTIGN. Asp-135 contacts L-tryptophan. Residues 147–149, Val-186, and 195–199 contribute to the ATP site; these read GED and KMSKS. The short motif at 195-199 is the 'KMSKS' region element; sequence KMSKS.

The protein belongs to the class-I aminoacyl-tRNA synthetase family. In terms of assembly, homodimer.

The protein resides in the cytoplasm. It carries out the reaction tRNA(Trp) + L-tryptophan + ATP = L-tryptophyl-tRNA(Trp) + AMP + diphosphate + H(+). Catalyzes the attachment of tryptophan to tRNA(Trp). The protein is Tryptophan--tRNA ligase of Pasteurella multocida (strain Pm70).